We begin with the raw amino-acid sequence, 120 residues long: Glycine cleavage system H protein (120 aa).

The region spanning 17–99 (VATVGITTYA…QGAGWFFKLK (83 aa)) is the Lipoyl-binding domain. N6-lipoyllysine is present on lysine 58.

It belongs to the GcvH family. In terms of assembly, the glycine cleavage system is composed of four proteins: P, T, L and H. (R)-lipoate serves as cofactor.

Its function is as follows. The glycine cleavage system catalyzes the degradation of glycine. The H protein shuttles the methylamine group of glycine from the P protein to the T protein. The protein is Glycine cleavage system H protein of Rhizobium etli (strain CIAT 652).